Reading from the N-terminus, the 396-residue chain is Elongation factor Tu (396 aa).

Residues 10–206 form the tr-type G domain; the sequence is KPHCNIGTIG…AVDAYIPQPE (197 aa). A G1 region spans residues 19 to 26; the sequence is GHVDHGKT. 19–26 lines the GTP pocket; it reads GHVDHGKT. T26 provides a ligand contact to Mg(2+). Positions 60–64 are G2; the sequence is GITIS. The segment at 81-84 is G3; the sequence is DCPG. Residues 81–85 and 136–139 each bind GTP; these read DCPGH and NKVD. The interval 136 to 139 is G4; that stretch reads NKVD. Residues 174–176 form a G5 region; sequence SAL.

It belongs to the TRAFAC class translation factor GTPase superfamily. Classic translation factor GTPase family. EF-Tu/EF-1A subfamily. Monomer.

It is found in the cytoplasm. It carries out the reaction GTP + H2O = GDP + phosphate + H(+). Functionally, GTP hydrolase that promotes the GTP-dependent binding of aminoacyl-tRNA to the A-site of ribosomes during protein biosynthesis. The chain is Elongation factor Tu from Granulibacter bethesdensis (strain ATCC BAA-1260 / CGDNIH1).